We begin with the raw amino-acid sequence, 138 residues long: Hydrogenase maturation factor HypA (138 aa).

Histidine 2 is a Ni(2+) binding site. Cysteine 73, cysteine 76, cysteine 110, and cysteine 113 together coordinate Zn(2+).

Belongs to the HypA/HybF family.

Functionally, involved in the maturation of [NiFe] hydrogenases. Required for nickel insertion into the metal center of the hydrogenase. The chain is Hydrogenase maturation factor HypA from Thermococcus sibiricus (strain DSM 12597 / MM 739).